Here is a 106-residue protein sequence, read N- to C-terminus: Hydrogenase expression/formation protein HoxL (106 aa).

This sequence belongs to the HupF/HypC family.

The polypeptide is Hydrogenase expression/formation protein HoxL (hoxL) (Azotobacter vinelandii).